A 386-amino-acid polypeptide reads, in one-letter code: ATP phosphoribosyltransferase regulatory subunit (386 aa).

It belongs to the class-II aminoacyl-tRNA synthetase family. HisZ subfamily. As to quaternary structure, heteromultimer composed of HisG and HisZ subunits.

It is found in the cytoplasm. It functions in the pathway amino-acid biosynthesis; L-histidine biosynthesis; L-histidine from 5-phospho-alpha-D-ribose 1-diphosphate: step 1/9. In terms of biological role, required for the first step of histidine biosynthesis. May allow the feedback regulation of ATP phosphoribosyltransferase activity by histidine. The polypeptide is ATP phosphoribosyltransferase regulatory subunit (Variovorax paradoxus (strain S110)).